A 402-amino-acid chain; its full sequence is Omega-3 fatty acid desaturase fat-1 (402 aa).

4 consecutive transmembrane segments (helical) span residues 79-99 (LVQD…FEYF), 101-121 (LFGY…LFVV), 235-255 (CVIS…IAGS), and 260-280 (FWYY…VTYL).

This sequence belongs to the fatty acid desaturase type 1 family.

The protein localises to the membrane. It carries out the reaction (9Z,12Z)-octadecadienoyl-CoA + 2 Fe(II)-[cytochrome b5] + O2 + 2 H(+) = (9Z,12Z,15Z)-octadecatrienoyl-CoA + 2 Fe(III)-[cytochrome b5] + 2 H2O. It catalyses the reaction (8Z,11Z,14Z)-eicosatrienoyl-CoA + 2 Fe(II)-[cytochrome b5] + O2 + 2 H(+) = (8Z,11Z,14Z,17Z)-eicosatetraenoyl-CoA + 2 Fe(III)-[cytochrome b5] + 2 H2O. The catalysed reaction is (5Z,8Z,11Z,14Z)-eicosatetraenoyl-CoA + 2 Fe(II)-[cytochrome b5] + O2 + 2 H(+) = (5Z,8Z,11Z,14Z,17Z)-eicosapentaenoyl-CoA + 2 Fe(III)-[cytochrome b5] + 2 H2O. The enzyme catalyses (7Z,10Z,13Z,16Z)-docosatetraenoyl-CoA + 2 Fe(II)-[cytochrome b5] + O2 + 2 H(+) = (7Z,10Z,13Z,16Z,19Z)-docosapentaenoyl-CoA + 2 Fe(III)-[cytochrome b5] + 2 H2O. It carries out the reaction (6Z,9Z,12Z)-octadecatrienoyl-CoA + 2 Fe(II)-[cytochrome b5] + O2 + 2 H(+) = (6Z,9Z,12Z,15Z)-octadecatetraenoyl-CoA + 2 Fe(III)-[cytochrome b5] + 2 H2O. The protein operates within lipid metabolism; polyunsaturated fatty acid biosynthesis. Functionally, omega-3 fatty acid desaturase that recognizes a range of 18- and 20-carbon omega-6 substrates. Introduces a double bond in the fatty acid chain three carbons away from terminal methyl group to biosynthesize n-3 (omega-3) polyunsaturated fatty acids (PUFAs) endogenously (PUFAs are essential for membrane structure and many cellular and physiological processes). Acts on a number of substrates like linoleoyl-CoA ((9Z,12Z)-octadecadienoyl-CoA, 18:2n-6), dihomo-gamma-linolenoyl-CoA ((8Z,11Z,14Z)-eicosatrienoyl-CoA, 20:3n-6), and arachidonoyl-CoA ((5Z,8Z,11Z,14Z)-eicosatetraenoyl-CoA, 20:4n-6), to generate alpha-linolenoyl-CoA ((9Z,12Z,15Z)-octadecatrienoyl-CoA, 18:3n-3), (8Z,11Z,14Z,17Z)-eicosatetraenoyl-CoA (20:4n-3) and (5Z,8Z,11Z,14Z,17Z)-eicosapentaenoyl-CoA (20:5n-3) respectively. Unlike plants, Caenorhabditis elegans desaturases seem to use fatty acyl-CoAs as substrates. The polypeptide is Omega-3 fatty acid desaturase fat-1 (fat-1) (Caenorhabditis elegans).